Reading from the N-terminus, the 370-residue chain is Ig heavy chain C region (370 aa).

Ig-like domains are found at residues 40-134 (PTVI…RNIT), 145-237 (PAIK…DSIH), and 247-347 (PSVS…RTVN). N-linked (GlcNAc...) asparagine glycosylation is found at Asn98, Asn132, Asn177, Asn343, Asn347, and Asn357.

This chain is Ig heavy chain C region, found in Heterodontus francisci (Horn shark).